A 736-amino-acid polypeptide reads, in one-letter code: Prospero homeobox protein 1 (736 aa).

Positions 103–135 are enriched in polar residues; sequence KNGGTEPSFQASGLSSTGSEVHQEDVCSNSSRD. A disordered region spans residues 103–146; that stretch reads KNGGTEPSFQASGLSSTGSEVHQEDVCSNSSRDSPQECLSPFGR. A Nuclear localization signal motif is present at residues 163–168; the sequence is RAKRAR. Disordered regions lie at residues 180-220, 261-301, 319-344, 445-465, and 499-518; these read PRVA…QQQS, YDST…EMCE, EIGE…HPEG, NSSD…SLHQ, and PSAS…DLTR. Residues 264 to 274 show a composition bias toward acidic residues; sequence TDSENDEDGNL. Residues 319 to 335 show a composition bias toward basic and acidic residues; sequence EIGENKPKREGPKEKDQ. Residues 450 to 460 show a composition bias toward low complexity; it reads PASAPPAGGHH. The segment covering 505 to 518 has biased composition (basic and acidic residues); sequence GKERASPESLDLTR. The Prospero-type homeo domain occupies 576–634; it reads QEGLSPNHLKKAKLMFFYTRYPSSNMLKTYFSDVKFNRCITSQLIKWFSNFREFYYIQM. Residues 576–734 form a homeo-Prospero region; sequence QEGLSPNHLK…KSPNCLQELL (159 aa). The 100-residue stretch at 635-734 folds into the Prospero domain; it reads EKYARQAIND…KSPNCLQELL (100 aa).

The protein belongs to the Prospero homeodomain family. In terms of tissue distribution, expressed most actively in the developing lens and midgut and at lower levels in the developing brain, heart, muscle and retina.

Its subcellular location is the nucleus. Transcription factor which may be involved in developmental processes such as cell fate determination, gene transcriptional regulation and progenitor cell regulation in a number of organs. May be essential in the development and function of the eye. May play a role in the regulation of the circadian rhythm by repressing the expression of clock genes. The chain is Prospero homeobox protein 1 (PROX1) from Gallus gallus (Chicken).